The chain runs to 133 residues: Small ribosomal subunit protein uS8 (133 aa).

This sequence belongs to the universal ribosomal protein uS8 family. Part of the 30S ribosomal subunit. Contacts proteins S5 and S12.

In terms of biological role, one of the primary rRNA binding proteins, it binds directly to 16S rRNA central domain where it helps coordinate assembly of the platform of the 30S subunit. In Chlamydia trachomatis serovar L2b (strain UCH-1/proctitis), this protein is Small ribosomal subunit protein uS8.